Consider the following 212-residue polypeptide: MVAPPQLRALLFAINALLSKRRYHAALAMLKGFRNGAVYGAKIRAPHALVMTFLFRSGSLREKLRAILQATYTHSWNLARFVFLYKGLCALQSHVQGKTYQAHSFVSAFIGGLLVFGNNNNINSQISMYLLSRVLFALCRLGVEKGFIPEPRLDPFPWFSGLVWGLVLWLFEYHRPTLQPSLQSSMTYLYEDSNVWHDLSDFFIYNKSQPSK.

2 consecutive transmembrane segments (helical) span residues 97–117 and 153–173; these read GKTYQAHSFVSAFIGGLLVFG and LDPFPWFSGLVWGLVLWLFEY. N-linked (GlcNAc...) asparagine glycosylation is present at asparagine 206.

The protein belongs to the peroxisomal membrane protein PXMP2/4 family. As to quaternary structure, interacts with PEX19.

It localises to the peroxisome membrane. This chain is Peroxisomal membrane protein 4 (PXMP4), found in Bos taurus (Bovine).